The following is a 357-amino-acid chain: Probable butyrate kinase (357 aa).

It belongs to the acetokinase family.

It localises to the cytoplasm. It catalyses the reaction butanoate + ATP = butanoyl phosphate + ADP. In Thermotoga petrophila (strain ATCC BAA-488 / DSM 13995 / JCM 10881 / RKU-1), this protein is Probable butyrate kinase.